The chain runs to 479 residues: Cardiolipin synthase A (479 aa).

2 consecutive transmembrane segments (helical) span residues 8–28 (FFGY…LHAV) and 38–58 (IAWA…YLVF). PLD phosphodiesterase domains are found at residues 218 to 245 (VNFR…GDEY) and 392 to 419 (QPGF…DNRS). Residues His223, Lys225, Asp230, His397, Lys399, and Asp404 contribute to the active site.

This sequence belongs to the phospholipase D family. Cardiolipin synthase subfamily. ClsA sub-subfamily.

The protein resides in the cell inner membrane. The enzyme catalyses 2 a 1,2-diacyl-sn-glycero-3-phospho-(1'-sn-glycerol) = a cardiolipin + glycerol. Its function is as follows. Catalyzes the reversible phosphatidyl group transfer from one phosphatidylglycerol molecule to another to form cardiolipin (CL) (diphosphatidylglycerol) and glycerol. The chain is Cardiolipin synthase A from Pseudomonas putida (strain GB-1).